Consider the following 302-residue polypeptide: Olfactory receptor 51H1 (302 aa).

Over Met1–Pro27 the chain is Extracellular. N-linked (GlcNAc...) asparagine glycosylation is present at Asn5. Residues Trp28 to Leu48 form a helical membrane-spanning segment. Residues Ala49 to Ser56 are Cytoplasmic-facing. The chain crosses the membrane as a helical span at residues Leu57–Met77. At Ser78–Met101 the chain is on the extracellular side. Cys99 and Cys191 are joined by a disulfide. Residues Gln102 to Phe122 traverse the membrane as a helical segment. At Asp123 to Asp141 the chain is on the cytoplasmic side. Residues Val142 to Pro162 traverse the membrane as a helical segment. Over Phe163–Ser198 the chain is Extracellular. Residues Leu199–Ser219 form a helical membrane-spanning segment. Over Tyr220–Thr239 the chain is Cytoplasmic. Residues Leu240 to Ala260 traverse the membrane as a helical segment. Over Ala261 to His276 the chain is Extracellular. The helical transmembrane segment at Met277–Val297 threads the bilayer. Residues Lys298–Ile302 lie on the Cytoplasmic side of the membrane.

Belongs to the G-protein coupled receptor 1 family.

It localises to the cell membrane. Odorant receptor. The chain is Olfactory receptor 51H1 (OR51H1) from Homo sapiens (Human).